A 134-amino-acid chain; its full sequence is Profilin-3 (134 aa).

A disulfide bridge connects residues Cys-13 and Cys-118. The Involved in PIP2 interaction signature appears at 84–100 (AVIRGKKGSGGITSKKT). Residue Thr-114 is modified to Phosphothreonine.

It belongs to the profilin family. Occurs in many kinds of cells as a complex with monomeric actin in a 1:1 ratio. In terms of processing, phosphorylated by MAP kinases.

It localises to the cytoplasm. It is found in the cytoskeleton. Binds to actin and affects the structure of the cytoskeleton. At high concentrations, profilin prevents the polymerization of actin, whereas it enhances it at low concentrations. In Olea europaea (Common olive), this protein is Profilin-3.